Here is a 303-residue protein sequence, read N- to C-terminus: Ribonuclease Z (303 aa).

Positions 61, 63, 65, 66, 139, 207, and 266 each coordinate Zn(2+). Aspartate 65 (proton acceptor) is an active-site residue.

The protein belongs to the RNase Z family. Homodimer. Zn(2+) is required as a cofactor.

The catalysed reaction is Endonucleolytic cleavage of RNA, removing extra 3' nucleotides from tRNA precursor, generating 3' termini of tRNAs. A 3'-hydroxy group is left at the tRNA terminus and a 5'-phosphoryl group is left at the trailer molecule.. Functionally, zinc phosphodiesterase, which displays some tRNA 3'-processing endonuclease activity. Probably involved in tRNA maturation, by removing a 3'-trailer from precursor tRNA. The chain is Ribonuclease Z from Clostridium kluyveri (strain ATCC 8527 / DSM 555 / NBRC 12016 / NCIMB 10680 / K1).